The sequence spans 61 residues: Small ribosomal subunit protein uS14B (61 aa).

Residues cysteine 24, cysteine 27, cysteine 40, and cysteine 43 each contribute to the Zn(2+) site.

It belongs to the universal ribosomal protein uS14 family. Zinc-binding uS14 subfamily. As to quaternary structure, part of the 30S ribosomal subunit. Contacts proteins S3 and S10. Zn(2+) serves as cofactor.

Functionally, binds 16S rRNA, required for the assembly of 30S particles and may also be responsible for determining the conformation of the 16S rRNA at the A site. The polypeptide is Small ribosomal subunit protein uS14B (Rhodococcus jostii (strain RHA1)).